A 441-amino-acid chain; its full sequence is ATP-dependent RNA helicase SUB2-1 (441 aa).

Acidic residues predominate over residues 1–19; that stretch reads MSHEGEEDLLEYSDNEQDI. The interval 1-46 is disordered; that stretch reads MSHEGEEDLLEYSDNEQDIQVDASKAAEPSELDATTAEDASNGDAE. The short motif at 57 to 85 is the Q motif element; sequence TGFKDFLLKPELARAIIDCGFEHPSEVQQ. One can recognise a Helicase ATP-binding domain in the interval 88–263; the sequence is IPQSIHGTDV…RRFLQNPLEI (176 aa). Residue 101–108 participates in ATP binding; that stretch reads AKSGLGKT. The short motif at 210–213 is the DECD box element; that stretch reads DECD. The 146-residue stretch at 291–436 folds into the Helicase C-terminal domain; it reads KLAQLLDDLE…EFPEEGIDPS (146 aa).

This sequence belongs to the DEAD box helicase family. DECD subfamily.

It localises to the nucleus. The catalysed reaction is ATP + H2O = ADP + phosphate + H(+). In terms of biological role, ATP-binding RNA helicase involved in transcription elongation and required for the export of mRNA out of the nucleus. SUB2 also plays a role in pre-mRNA splicing and spliceosome assembly. May be involved in rDNA and telomeric silencing, and maintenance of genome integrity. The protein is ATP-dependent RNA helicase SUB2-1 (SUB2-1) of Vanderwaltozyma polyspora (strain ATCC 22028 / DSM 70294 / BCRC 21397 / CBS 2163 / NBRC 10782 / NRRL Y-8283 / UCD 57-17) (Kluyveromyces polysporus).